We begin with the raw amino-acid sequence, 360 residues long: Histidinol-phosphate aminotransferase (360 aa).

Lys211 carries the post-translational modification N6-(pyridoxal phosphate)lysine.

It belongs to the class-II pyridoxal-phosphate-dependent aminotransferase family. Histidinol-phosphate aminotransferase subfamily. In terms of assembly, homodimer. It depends on pyridoxal 5'-phosphate as a cofactor.

The enzyme catalyses L-histidinol phosphate + 2-oxoglutarate = 3-(imidazol-4-yl)-2-oxopropyl phosphate + L-glutamate. It functions in the pathway amino-acid biosynthesis; L-histidine biosynthesis; L-histidine from 5-phospho-alpha-D-ribose 1-diphosphate: step 7/9. This is Histidinol-phosphate aminotransferase from Cronobacter sakazakii (strain ATCC BAA-894) (Enterobacter sakazakii).